The primary structure comprises 190 residues: Xanthine phosphoribosyltransferase 2 (190 aa).

Leucine 20 and asparagine 27 together coordinate xanthine. A 5-phospho-alpha-D-ribose 1-diphosphate-binding site is contributed by 129–133; that stretch reads ANGCA. Lysine 157 provides a ligand contact to xanthine.

Belongs to the purine/pyrimidine phosphoribosyltransferase family. Xpt subfamily. As to quaternary structure, homodimer.

The protein localises to the cytoplasm. It carries out the reaction XMP + diphosphate = xanthine + 5-phospho-alpha-D-ribose 1-diphosphate. It functions in the pathway purine metabolism; XMP biosynthesis via salvage pathway; XMP from xanthine: step 1/1. Its function is as follows. Converts the preformed base xanthine, a product of nucleic acid breakdown, to xanthosine 5'-monophosphate (XMP), so it can be reused for RNA or DNA synthesis. The polypeptide is Xanthine phosphoribosyltransferase 2 (Clostridium botulinum (strain ATCC 19397 / Type A)).